A 50-amino-acid polypeptide reads, in one-letter code: Protein PsbN (50 aa).

A helical membrane pass occupies residues 14–34 (VAVTILAVLLALTGFGLWTAF).

The protein belongs to the PsbN family.

The protein localises to the cellular thylakoid membrane. In terms of biological role, may play a role in photosystem I and II biogenesis. The sequence is that of Protein PsbN from Prochlorococcus marinus (strain MIT 9515).